Consider the following 314-residue polypeptide: Transcription factor SOX-12 (314 aa).

Disordered stretches follow at residues 1–40 (MVQQ…SGHI) and 101–287 (MADY…FEFP). Residues 40–108 (IKRPMNAFMV…KHMADYPDYK (69 aa)) constitute a DNA-binding region (HMG box). Gly residues predominate over residues 149 to 159 (RASGGPLGGGA). Acidic residues predominate over residues 162–173 (PEDDDEDEEEEL). Basic and acidic residues predominate over residues 174 to 187 (LEVRLLETPGRELW). A compositionally biased stretch (low complexity) spans 191-217 (PAGRAARGPAERAQGPSGEGAAASAAS). Acidic residues predominate over residues 221–243 (SEDEEPEEEEEEAATAEEGEEET). The segment at 282-314 (SHFEFPDYCTPEVTEMIAGDWRSSSIADLVFTY) is required for transcriptional activation activity and synergistic coactivation of transcriptional activity with POU3F2.

In terms of tissue distribution, expressed in splenic and thymic regulatory T-cells (at protein level). Expressed in embryonic molar and incisor teeth.

Its subcellular location is the nucleus. Its function is as follows. Transcription factor that binds to DNA at the consensus sequence 5'-ACCAAAG-3'. Acts as a transcriptional activator. Binds cooperatively with POU3F2/BRN2 or POU3F1/OCT6 to gene promoters, which enhances transcriptional activation. Involved in the differentiation of naive CD4-positive T-cells into peripherally induced regulatory T (pT reg) cells under inflammatory conditions. Binds to the promoter region of the FOXP3 gene and promotes its transcription, and might thereby contribute to pT reg cell differentiation in the spleen and lymph nodes during inflammation. Plays a redundant role with SOX4 and SOX11 in cell survival of developing tissues such as the neural tube, branchial arches and somites, thereby contributing to organogenesis. This is Transcription factor SOX-12 (Sox12) from Mus musculus (Mouse).